The chain runs to 165 residues: V-type proton ATPase 16 kDa proteolipid subunit (165 aa).

Topologically, residues 1–10 are lumenal; that stretch reads MSSTFSGDET. The chain crosses the membrane as a helical span at residues 11 to 33; that stretch reads APFFGFLGAAAALVFSCMGAAYG. At 34 to 55 the chain is on the cytoplasmic side; it reads TAKSGVGVASMGVMRPELVMKS. A helical membrane pass occupies residues 56–76; that stretch reads IVPVVMAGVLGIYGLIIAVII. The Lumenal portion of the chain corresponds to 77 to 95; it reads STGINPKAKSYYLFDGYAH. A helical transmembrane segment spans residues 96-117; sequence LSSGLACGLAGLSAGMAIGIVG. The Cytoplasmic segment spans residues 118–129; that stretch reads DAGVRANAQQPK. A helical transmembrane segment spans residues 130–155; sequence LFVGMILILIFAEALALYGLIVGIIL. Over 156–165 the chain is Lumenal; it reads SSRAGQSRAE.

The protein belongs to the V-ATPase proteolipid subunit family. As to quaternary structure, V-ATPase is a heteromultimeric enzyme composed of a peripheral catalytic V1 complex (main components: subunits A, B, C, D, E, and F) attached to an integral membrane V0 proton pore complex (main component: the proteolipid protein; which is present as a hexamer that forms the proton-conducting pore).

The protein localises to the vacuole membrane. Its function is as follows. Proton-conducting pore forming subunit of the membrane integral V0 complex of vacuolar ATPase. V-ATPase is responsible for acidifying a variety of intracellular compartments in eukaryotic cells. The chain is V-type proton ATPase 16 kDa proteolipid subunit (CVA16-2) from Gossypium hirsutum (Upland cotton).